Consider the following 434-residue polypeptide: Trigger factor (434 aa).

In terms of domain architecture, PPIase FKBP-type spans Glu-161 to Pro-246.

The protein belongs to the FKBP-type PPIase family. Tig subfamily.

It localises to the cytoplasm. The enzyme catalyses [protein]-peptidylproline (omega=180) = [protein]-peptidylproline (omega=0). Functionally, involved in protein export. Acts as a chaperone by maintaining the newly synthesized protein in an open conformation. Functions as a peptidyl-prolyl cis-trans isomerase. The polypeptide is Trigger factor (Erwinia tasmaniensis (strain DSM 17950 / CFBP 7177 / CIP 109463 / NCPPB 4357 / Et1/99)).